We begin with the raw amino-acid sequence, 77 residues long: Oxyopinin-4a (77 aa).

Positions 1–20 are cleaved as a signal peptide; sequence MKISQVFIFVFLLMISVAWA. A propeptide spanning residues 21–47 is cleaved from the precursor; it reads NEAYEEESNYLSERFDADVEEITPEFR. An intrachain disulfide couples cysteine 51 to cysteine 57.

Expressed by the venom gland.

It is found in the secreted. Its subcellular location is the target cell membrane. Functionally, disrupts cell membranes through the formation of pores. Has antibacterial activity against Gram-positive bacteria S.aureus (MIC=10 uM) and B.subtilis (MIC=0.5 uM) as well as Gram-negative bacteria P.fluorescens (MIC=1 uM) and E.coli (MIC=0.5 uM). Has hemolytic activity against human erythrocytes (EC(50)=7 uM). This chain is Oxyopinin-4a, found in Oxyopes takobius (Lynx spider).